We begin with the raw amino-acid sequence, 375 residues long: Succinyl-diaminopimelate desuccinylase (375 aa).

H66 contacts Zn(2+). The active site involves D68. Residue D99 coordinates Zn(2+). Residue E133 is the Proton acceptor of the active site. The Zn(2+) site is built by E134, E162, and H348.

The protein belongs to the peptidase M20A family. DapE subfamily. In terms of assembly, homodimer. Zn(2+) serves as cofactor. Requires Co(2+) as cofactor.

It catalyses the reaction N-succinyl-(2S,6S)-2,6-diaminopimelate + H2O = (2S,6S)-2,6-diaminopimelate + succinate. Its pathway is amino-acid biosynthesis; L-lysine biosynthesis via DAP pathway; LL-2,6-diaminopimelate from (S)-tetrahydrodipicolinate (succinylase route): step 3/3. Functionally, catalyzes the hydrolysis of N-succinyl-L,L-diaminopimelic acid (SDAP), forming succinate and LL-2,6-diaminopimelate (DAP), an intermediate involved in the bacterial biosynthesis of lysine and meso-diaminopimelic acid, an essential component of bacterial cell walls. This chain is Succinyl-diaminopimelate desuccinylase, found in Herminiimonas arsenicoxydans.